A 290-amino-acid polypeptide reads, in one-letter code: MPEIHLGAHTIRSHGVTVARFHMHDWLILLLLIVIEIVLNVIEPFHRFVGEDMLTDLRYPLQDNTIPFWAVPLIAVVLPFAVICVYYFIRNDVYDLHHAILGLLFSVLITGVITDAIKDAVGRPRPDFFWRCFPDGIGIFHNVTKNVLCTGAKDVVKEGHKSFPSGHTSWSFAGLGFLSLYLSGKIRVFDQRGHVAKLCIVILPLLVAALVGVSRVDDYWHHWQDVFGGAIIGLTVATFCYLQFFPPPYDPDGWGPHAYFQMLADSRNDVQDSAGMNHLSVRQTELESVR.

A run of 3 helical transmembrane segments spans residues 26-46 (WLIL…EPFH), 69-89 (WAVP…YYFI), and 93-113 (VYDL…TGVI). Residue Asn-142 is glycosylated (N-linked (GlcNAc...) asparagine). Helical transmembrane passes span 162 to 182 (SFPS…SLYL), 193 to 213 (GHVA…LVGV), and 226 to 246 (VFGG…QFFP).

This sequence belongs to the PA-phosphatase related phosphoesterase family. Expressed in roots, stems, leaves, buds, flowers and siliques.

It localises to the membrane. Its activity is regulated as follows. PA phosphatase activity not inhibited by N-ethylmaleimide. May play a general 'housekeeping role' in lipid metabolism. Exhibits both diacylglycerol pyrophosphate (DGPP) phosphatase and phosphatidate (PA) phosphatase activities with no preference for either substrate. May play a role downstream of the ABA signaling pathway during seed germination and in stomatal movement in leaves. This Arabidopsis thaliana (Mouse-ear cress) protein is Lipid phosphate phosphatase 2 (LPP2).